The sequence spans 286 residues: Simplagrin (286 aa).

The first 20 residues, 1 to 20, serve as a signal peptide directing secretion; sequence MKKFCLIFLLLALTALHVKG. The tract at residues 17 to 179 is disordered; sequence HVKGSPIPDE…GSSSGGEESA (163 aa). Composition is skewed to acidic residues over residues 24-69 and 103-129; these read PDEE…DGQE and VESG…TGGE. Asn-116 carries an N-linked (GlcNAc...) asparagine glycan. The segment covering 166 to 177 has biased composition (low complexity); that stretch reads SNRAGSSSGGEE.

It belongs to the aegyptin family. Monomeric in solution; likely has an elongated non-globular form. Interacts with human and rat collagens (via a RGQOGVMGF peptide, where O is hydroxyproline). In terms of processing, not glycosylated. As to expression, salivary gland.

The protein localises to the secreted. Inhibits host platelet aggregation induced by low concentrations of collagen via blocking the von Willebrand Factor (VWF) interaction with collagen. The chain is Simplagrin from Simulium nigrimanum (Black fly).